The primary structure comprises 459 residues: ADP-specific phosphofructokinase (459 aa).

Residues 1–457 (MMEFLKDFQK…FASYLSLLKR (457 aa)) enclose the ADPK domain. Glu-268, Glu-298, and Asp-441 together coordinate Mg(2+). Asp-441 serves as the catalytic Proton acceptor.

The protein belongs to the carbohydrate kinase PfkC family. Mg(2+) is required as a cofactor.

The protein resides in the cytoplasm. The enzyme catalyses beta-D-fructose 6-phosphate + ADP = beta-D-fructose 1,6-bisphosphate + AMP + H(+). The protein operates within carbohydrate degradation; glycolysis. Catalyzes the phosphorylation of fructose 6-phosphate to fructose 1,6-bisphosphate using ADP as the phosphate donor. The sequence is that of ADP-specific phosphofructokinase from Thermococcus litoralis.